Here is a 298-residue protein sequence, read N- to C-terminus: Adaptation to cold protein C (298 aa).

As to quaternary structure, interacts with the C-terminal extension of AtcJ. Also interacts with AtcB, but not with AtcA.

Its activity is regulated as follows. Interaction with AtcJ stabilizes AtcC. Involved in cold adaptation. The sequence is that of Adaptation to cold protein C from Shewanella oneidensis (strain ATCC 700550 / JCM 31522 / CIP 106686 / LMG 19005 / NCIMB 14063 / MR-1).